Consider the following 193-residue polypeptide: Signal peptidase I T (193 aa).

Residues 1–25 (MTEEKNTNTEKTAKKKTNTYLEWGK) are Cytoplasmic-facing. The chain crosses the membrane as a helical span at residues 26 to 42 (AIVIAVLLALLIRHFLF). The Extracellular portion of the chain corresponds to 43–193 (EPYLVEGSSM…FPFNEMRQTK (151 aa)). Active-site residues include serine 51 and lysine 93.

The protein belongs to the peptidase S26 family.

Its subcellular location is the cell membrane. It carries out the reaction Cleavage of hydrophobic, N-terminal signal or leader sequences from secreted and periplasmic proteins.. The polypeptide is Signal peptidase I T (sipT) (Bacillus subtilis (strain 168)).